A 301-amino-acid chain; its full sequence is Protoheme IX farnesyltransferase 1 (301 aa).

9 consecutive transmembrane segments (helical) span residues 29–49 (VVAL…PHAV), 51–71 (VQPL…AAAL), 101–121 (ALIF…SLVN), 123–143 (LTAW…TAYL), 150–170 (NIVI…TAVT), 177–197 (ALLL…ALAI), 223–243 (CILL…LVGM), 244–264 (CGPV…YKAW), and 274–294 (LAMQ…MALL).

This sequence belongs to the UbiA prenyltransferase family. Protoheme IX farnesyltransferase subfamily.

It localises to the cell inner membrane. The enzyme catalyses heme b + (2E,6E)-farnesyl diphosphate + H2O = Fe(II)-heme o + diphosphate. The protein operates within porphyrin-containing compound metabolism; heme O biosynthesis; heme O from protoheme: step 1/1. Converts heme B (protoheme IX) to heme O by substitution of the vinyl group on carbon 2 of heme B porphyrin ring with a hydroxyethyl farnesyl side group. This is Protoheme IX farnesyltransferase 1 from Shewanella baltica (strain OS195).